The primary structure comprises 313 residues: Pyrimidine-specific ribonucleoside hydrolase RihB (313 aa).

Residue aspartate 11 is the Proton acceptor of the active site. Ca(2+)-binding residues include aspartate 11, aspartate 16, and valine 124. Glutamine 227 and histidine 239 together coordinate substrate. Aspartate 240 is a binding site for Ca(2+).

The protein belongs to the IUNH family. RihB subfamily. Homotetramer. It depends on Ca(2+) as a cofactor.

The catalysed reaction is a pyrimidine ribonucleoside + H2O = a pyrimidine nucleobase + D-ribose. Its function is as follows. Hydrolyzes cytidine or uridine to ribose and cytosine or uracil, respectively. Has a clear preference for cytidine over uridine. Strictly specific for ribonucleosides. The chain is Pyrimidine-specific ribonucleoside hydrolase RihB from Shigella sonnei (strain Ss046).